The sequence spans 167 residues: uncharacterized protein (167 aa).

The helical transmembrane segment at 5–27 threads the bilayer; that stretch reads LILLTFVSFVFSKTFYYDVYVFF.

Its subcellular location is the membrane. This is an uncharacterized protein from Aquifex aeolicus (strain VF5).